The following is a 248-amino-acid chain: Proteasome subunit alpha (248 aa).

This sequence belongs to the peptidase T1A family. As to quaternary structure, the 20S proteasome core is composed of 14 alpha and 14 beta subunits that assemble into four stacked heptameric rings, resulting in a barrel-shaped structure. The two inner rings, each composed of seven catalytic beta subunits, are sandwiched by two outer rings, each composed of seven alpha subunits. The catalytic chamber with the active sites is on the inside of the barrel. Has a gated structure, the ends of the cylinder being occluded by the N-termini of the alpha-subunits. Is capped by the proteasome-associated ATPase, ARC.

The protein localises to the cytoplasm. It participates in protein degradation; proteasomal Pup-dependent pathway. Its activity is regulated as follows. The formation of the proteasomal ATPase ARC-20S proteasome complex, likely via the docking of the C-termini of ARC into the intersubunit pockets in the alpha-rings, may trigger opening of the gate for substrate entry. Interconversion between the open-gate and close-gate conformations leads to a dynamic regulation of the 20S proteasome proteolysis activity. Its function is as follows. Component of the proteasome core, a large protease complex with broad specificity involved in protein degradation. The protein is Proteasome subunit alpha of Mycobacterium bovis (strain BCG / Pasteur 1173P2).